We begin with the raw amino-acid sequence, 319 residues long: Ester hydrolase C11orf54 homolog (319 aa).

Residues His270, His272, and His282 each coordinate Zn(2+).

As to quaternary structure, monomer. Zn(2+) serves as cofactor.

The protein localises to the nucleus. Its subcellular location is the cytoplasm. Exhibits ester hydrolase activity on the substrate p-nitrophenyl acetate, in vitro. May regulate DNA damage and repair by regulating HIF1A degradation via chaperone-mediated autophagy (CMA). In Danio rerio (Zebrafish), this protein is Ester hydrolase C11orf54 homolog.